Here is a 173-residue protein sequence, read N- to C-terminus: Crossover junction endodeoxyribonuclease RuvC (173 aa).

Catalysis depends on residues aspartate 8, glutamate 69, and aspartate 141. The Mg(2+) site is built by aspartate 8, glutamate 69, and aspartate 141.

Belongs to the RuvC family. As to quaternary structure, homodimer which binds Holliday junction (HJ) DNA. The HJ becomes 2-fold symmetrical on binding to RuvC with unstacked arms; it has a different conformation from HJ DNA in complex with RuvA. In the full resolvosome a probable DNA-RuvA(4)-RuvB(12)-RuvC(2) complex forms which resolves the HJ. Mg(2+) serves as cofactor.

It localises to the cytoplasm. The catalysed reaction is Endonucleolytic cleavage at a junction such as a reciprocal single-stranded crossover between two homologous DNA duplexes (Holliday junction).. In terms of biological role, the RuvA-RuvB-RuvC complex processes Holliday junction (HJ) DNA during genetic recombination and DNA repair. Endonuclease that resolves HJ intermediates. Cleaves cruciform DNA by making single-stranded nicks across the HJ at symmetrical positions within the homologous arms, yielding a 5'-phosphate and a 3'-hydroxyl group; requires a central core of homology in the junction. The consensus cleavage sequence is 5'-(A/T)TT(C/G)-3'. Cleavage occurs on the 3'-side of the TT dinucleotide at the point of strand exchange. HJ branch migration catalyzed by RuvA-RuvB allows RuvC to scan DNA until it finds its consensus sequence, where it cleaves and resolves the cruciform DNA. The sequence is that of Crossover junction endodeoxyribonuclease RuvC from Xylella fastidiosa (strain 9a5c).